A 227-amino-acid chain; its full sequence is Protein rapunzel (227 aa).

A helical membrane pass occupies residues 179–196; it reads LAYLFCIGFIALMGYYGI.

It localises to the membrane. This Danio rerio (Zebrafish) protein is Protein rapunzel.